Here is a 186-residue protein sequence, read N- to C-terminus: MKTIEVDDELYHYIASRTQAIGESASDILRRLLRLPASPQPFVLVQENMINELKDLAKLPKQKKQLHQQDKVIKQVEFVLASSLFNNETKGVNRFLYLLSALYKADPESFSHATENVQGSERIYFARDEQTILATGSSVKAKQIPESPFWVITNNNTERKGIILCALMNAMELPEELVARIKAQFN.

The protein belongs to the SeqA family. Homodimer. Polymerizes to form helical filaments.

The protein localises to the cytoplasm. In terms of biological role, negative regulator of replication initiation, which contributes to regulation of DNA replication and ensures that replication initiation occurs exactly once per chromosome per cell cycle. Binds to pairs of hemimethylated GATC sequences in the oriC region, thus preventing assembly of replication proteins and re-initiation at newly replicated origins. Repression is relieved when the region becomes fully methylated. This Glaesserella parasuis serovar 5 (strain SH0165) (Haemophilus parasuis) protein is Negative modulator of initiation of replication.